The following is a 713-amino-acid chain: Low-density lipoprotein receptor-related protein 10 (713 aa).

The first 16 residues, 1–16 (MLLATLLLLLLGGALA), serve as a signal peptide directing secretion. At 17–440 (HPDRIIFPNH…WDCSYVLPRK (424 aa)) the chain is on the extracellular side. 2 disulfide bridges follow: Cys-28–Cys-57 and Cys-80–Cys-98. The 109-residue stretch at 28–136 (CEDPPAVLLE…QGFLLSYSQD (109 aa)) folds into the CUB 1 domain. Residue Asn-56 is glycosylated (N-linked (GlcNAc...) asparagine). N-linked (GlcNAc...) asparagine glycosylation occurs at Asn-111. The region spanning 139–175 (MCLQEEFQCLNHRCVSAVQRCDGVDACGDGSDEAGCS) is the LDL-receptor class A 1 domain. Intrachain disulfides connect Cys-140–Cys-152, Cys-147–Cys-165, Cys-159–Cys-174, and Cys-192–Cys-220. Residues 192–305 (CNVTLEDFYG…RGFNATYHVR (114 aa)) enclose the CUB 2 domain. N-linked (GlcNAc...) asparagine glycosylation is found at Asn-193 and Asn-299. 3 consecutive LDL-receptor class A domains span residues 307–354 (YCLP…EDCP), 355–397 (GCPP…RRCR), and 398–434 (HCQPGNFRCRDEKCVYETWVCDGQPDCADGSDEWDCS). Intrachain disulfides connect Cys-308–Cys-331, Cys-315–Cys-344, Cys-338–Cys-353, Cys-356–Cys-374, Cys-363–Cys-387, Cys-381–Cys-396, Cys-399–Cys-411, Cys-406–Cys-424, and Cys-418–Cys-433. A helical transmembrane segment spans residues 441–461 (VITAAVIGSLVCGLLLVIALG). Over 462-713 (CTCKLYAIRT…AEAEDEPLLT (252 aa)) the chain is Cytoplasmic. Residues 564–637 (GLLPRTNTPA…SPAPTTVPEA (74 aa)) are disordered. Residues 569 to 584 (TNTPARASEARSQVTP) are compositionally biased toward polar residues. Thr-596 is modified (phosphothreonine). A compositionally biased stretch (low complexity) spans 621-636 (PLPSASTSPAPTTVPE).

It belongs to the LDLR family. Expressed in blood leukocyte, lung, placenta, small intestine, liver, kidney, spleen, thymus, colon, skeletal muscle and heart.

It is found in the membrane. Its subcellular location is the coated pit. Functionally, probable receptor, which is involved in the internalization of lipophilic molecules and/or signal transduction. May be involved in the uptake of lipoprotein APOE in liver. The sequence is that of Low-density lipoprotein receptor-related protein 10 (LRP10) from Homo sapiens (Human).